Reading from the N-terminus, the 296-residue chain is Ribosomal RNA small subunit methyltransferase A (296 aa).

S-adenosyl-L-methionine-binding residues include Asn32, Leu34, Gly59, Glu80, Asp105, and Asn130.

The protein belongs to the class I-like SAM-binding methyltransferase superfamily. rRNA adenine N(6)-methyltransferase family. RsmA subfamily.

The protein localises to the cytoplasm. It catalyses the reaction adenosine(1518)/adenosine(1519) in 16S rRNA + 4 S-adenosyl-L-methionine = N(6)-dimethyladenosine(1518)/N(6)-dimethyladenosine(1519) in 16S rRNA + 4 S-adenosyl-L-homocysteine + 4 H(+). Its function is as follows. Specifically dimethylates two adjacent adenosines (A1518 and A1519) in the loop of a conserved hairpin near the 3'-end of 16S rRNA in the 30S particle. May play a critical role in biogenesis of 30S subunits. The polypeptide is Ribosomal RNA small subunit methyltransferase A (Levilactobacillus brevis (strain ATCC 367 / BCRC 12310 / CIP 105137 / JCM 1170 / LMG 11437 / NCIMB 947 / NCTC 947) (Lactobacillus brevis)).